The following is a 356-amino-acid chain: Arginine kinase (356 aa).

Ala2 bears the N-acetylalanine mark. A Phosphagen kinase N-terminal domain is found at 9 to 91 (KLEEGFKKLE…FDPIIEDYHK (83 aa)). 64 to 68 (GVGIY) contributes to the L-arginine binding site. A Phosphagen kinase C-terminal domain is found at 119–356 (FVISTRVRCG…LELIKIEKEM (238 aa)). ATP is bound by residues 122 to 126 (STRVR) and His185. Position 225 (Glu225) interacts with L-arginine. Arg229 is an ATP binding site. Cys271 contributes to the L-arginine binding site. Residues 280–284 (RASVH) and 309–314 (RGTRGE) each bind ATP. Glu314 is a binding site for L-arginine.

Belongs to the ATP:guanido phosphotransferase family.

It catalyses the reaction L-arginine + ATP = N(omega)-phospho-L-arginine + ADP + H(+). This chain is Arginine kinase, found in Homarus gammarus (European lobster).